The chain runs to 380 residues: Cytochrome b (380 aa).

A run of 4 helical transmembrane segments spans residues 34-54 (FGSL…FLAM), 78-99 (WLLR…YFHI), 114-134 (WNIG…GYVL), and 179-199 (FFTF…IHLL). Heme b contacts are provided by His84 and His98. Residue His197 coordinates heme b. Position 202 (His202) interacts with a ubiquinone. The next 4 helical transmembrane spans lie at 227–247 (FKDL…STFA), 289–309 (LGGV…PITH), 321–341 (TAKA…WIGG), and 348–368 (FISI…LIIP).

The protein belongs to the cytochrome b family. The cytochrome bc1 complex contains 3 respiratory subunits (MT-CYB, CYC1 and UQCRFS1), 2 core proteins (UQCRC1 and UQCRC2) and probably 6 low-molecular weight proteins. It depends on heme b as a cofactor.

The protein localises to the mitochondrion inner membrane. Its function is as follows. Component of the ubiquinol-cytochrome c reductase complex (complex III or cytochrome b-c1 complex) that is part of the mitochondrial respiratory chain. The b-c1 complex mediates electron transfer from ubiquinol to cytochrome c. Contributes to the generation of a proton gradient across the mitochondrial membrane that is then used for ATP synthesis. The protein is Cytochrome b (mt-cyb) of Glandirana rugosa (Japanese wrinkled frog).